A 104-amino-acid polypeptide reads, in one-letter code: Pyrimidine/purine nucleoside phosphorylase (104 aa).

It belongs to the nucleoside phosphorylase PpnP family.

It catalyses the reaction a purine D-ribonucleoside + phosphate = a purine nucleobase + alpha-D-ribose 1-phosphate. It carries out the reaction adenosine + phosphate = alpha-D-ribose 1-phosphate + adenine. The enzyme catalyses cytidine + phosphate = cytosine + alpha-D-ribose 1-phosphate. The catalysed reaction is guanosine + phosphate = alpha-D-ribose 1-phosphate + guanine. It catalyses the reaction inosine + phosphate = alpha-D-ribose 1-phosphate + hypoxanthine. It carries out the reaction thymidine + phosphate = 2-deoxy-alpha-D-ribose 1-phosphate + thymine. The enzyme catalyses uridine + phosphate = alpha-D-ribose 1-phosphate + uracil. The catalysed reaction is xanthosine + phosphate = alpha-D-ribose 1-phosphate + xanthine. In terms of biological role, catalyzes the phosphorolysis of diverse nucleosides, yielding D-ribose 1-phosphate and the respective free bases. Can use uridine, adenosine, guanosine, cytidine, thymidine, inosine and xanthosine as substrates. Also catalyzes the reverse reactions. In Colwellia psychrerythraea (strain 34H / ATCC BAA-681) (Vibrio psychroerythus), this protein is Pyrimidine/purine nucleoside phosphorylase.